We begin with the raw amino-acid sequence, 298 residues long: Iron-regulated virulence regulatory protein IrgB (298 aa).

In terms of domain architecture, HTH lysR-type spans 1–59 (MQDLSAVKAFHALCQHKSLTAAAKALEQPKSTLSRRLAQLEEDLGQSLLMRQGNRLTLT). The segment at residues 19–38 (LTAAAKALEQPKSTLSRRLA) is a DNA-binding region (H-T-H motif).

Belongs to the LysR transcriptional regulatory family.

Its function is as follows. Transcription activation of the irgA gene. In the presence of sufficient iron, transcription of both irgA and irgB is negatively regulated by a fur-like protein. In low iron conditions, negative regulation of transcription is removed, and production of irgB leads to positive transcriptional activation of irgA. The protein is Iron-regulated virulence regulatory protein IrgB (irgB) of Vibrio cholerae serotype O1 (strain ATCC 39315 / El Tor Inaba N16961).